The following is a 386-amino-acid chain: Mannitol-1-phosphate 5-dehydrogenase (386 aa).

4–15 contacts NAD(+); the sequence is ALHFGAGNIGRG.

This sequence belongs to the mannitol dehydrogenase family.

The catalysed reaction is D-mannitol 1-phosphate + NAD(+) = beta-D-fructose 6-phosphate + NADH + H(+). The sequence is that of Mannitol-1-phosphate 5-dehydrogenase from Caldanaerobacter subterraneus subsp. tengcongensis (strain DSM 15242 / JCM 11007 / NBRC 100824 / MB4) (Thermoanaerobacter tengcongensis).